The chain runs to 122 residues: Small ribosomal subunit protein uS12c (122 aa).

This sequence belongs to the universal ribosomal protein uS12 family. As to quaternary structure, part of the 30S ribosomal subunit.

The protein localises to the plastid. Its subcellular location is the chloroplast. With S4 and S5 plays an important role in translational accuracy. Located at the interface of the 30S and 50S subunits. This is Small ribosomal subunit protein uS12c (rps12) from Illicium oligandrum (Star anise).